The following is a 205-amino-acid chain: Ypt/Rab-type GTPase Rab7 (205 aa).

GTP-binding positions include 17–23 (SGVGKTS), 33–40 (FSASYKAT), Gly66, 125–128 (NKID), and 157–159 (SAK). Residues 37–45 (YKATIGADF) carry the Effector region motif. S-geranylgeranyl cysteine attachment occurs at residues Cys203 and Cys205. Cys205 carries the cysteine methyl ester modification.

This sequence belongs to the small GTPase superfamily. Rab family.

Its subcellular location is the cell membrane. Its activity is regulated as follows. Alternates between an inactive form bound to GDP and an active form bound to GTP. Activated by guanine nucleotide-exchange factors (GEFs), and inactivated by GTPase-activating proteins (GAPs). Functionally, ypt/Rab-type GTPases are key regulators of membrane trafficking and intracellular vesicular transport. They act as molecular switches that convert between GTP-bound and GDP-bound states, and regulate virtually all steps of membrane traffic from the formation of the transport vesicle at the donor membrane to its fusion at the target membrane. In the GDP-bound state, Ypt proteins are predominantly cytosolic, solubilized through the interaction with a GDP dissociation inhibitor (GDI). In the GTP-bound state, the proteins are membrane bound and interact with specific effector proteins that select cargo, promote vesicle movement, or verify the correct site of fusion. This chain is Ypt/Rab-type GTPase Rab7 (gtp-14), found in Neurospora crassa (strain ATCC 24698 / 74-OR23-1A / CBS 708.71 / DSM 1257 / FGSC 987).